The chain runs to 112 residues: QTGAKAPRKALANKAARKTAPADGGVKKPHRFRPGTVALREIRKYQKSTELLIRKLPFQRLVREIASDYKSDLRFQSSAVAAIQEAAEAYMVGLFEDTNLCAIHAGRVTIMP.

The tract at residues 1 to 31 (QTGAKAPRKALANKAARKTAPADGGVKKPHR) is disordered.

The protein belongs to the histone H3 family. The nucleosome is a histone octamer containing two molecules each of H2A, H2B, H3 and H4 assembled in one H3-H4 heterotetramer and two H2A-H2B heterodimers. The octamer wraps approximately 147 bp of DNA.

Its subcellular location is the nucleus. The protein localises to the chromosome. Its function is as follows. Core component of nucleosome. Nucleosomes wrap and compact DNA into chromatin, limiting DNA accessibility to the cellular machineries which require DNA as a template. Histones thereby play a central role in transcription regulation, DNA repair, DNA replication and chromosomal stability. DNA accessibility is regulated via a complex set of post-translational modifications of histones, also called histone code, and nucleosome remodeling. The polypeptide is Histone H3-4 (H3-4) (Stylonychia lemnae (Ciliate)).